The primary structure comprises 347 residues: NADH-ubiquinone oxidoreductase chain 2 (347 aa).

10 helical membrane passes run 13–33 (IFAG…WVGL), 55–75 (AAIK…MAIL), 96–116 (LMIM…FWVP), 123–143 (PLMS…SIMY), 149–169 (LNVN…SWGG), 178–198 (ILAY…PYNP), 201–221 (TILN…LLNL), 247–267 (TLLS…WVII), 274–294 (NSLI…YFYL), and 326–346 (LPTL…MLMI).

It belongs to the complex I subunit 2 family. Core subunit of respiratory chain NADH dehydrogenase (Complex I) which is composed of 45 different subunits. Interacts with TMEM242.

It localises to the mitochondrion inner membrane. It catalyses the reaction a ubiquinone + NADH + 5 H(+)(in) = a ubiquinol + NAD(+) + 4 H(+)(out). In terms of biological role, core subunit of the mitochondrial membrane respiratory chain NADH dehydrogenase (Complex I) which catalyzes electron transfer from NADH through the respiratory chain, using ubiquinone as an electron acceptor. Essential for the catalytic activity and assembly of complex I. This chain is NADH-ubiquinone oxidoreductase chain 2, found in Pan paniscus (Pygmy chimpanzee).